Consider the following 291-residue polypeptide: Citrate lyase subunit beta (291 aa).

Residues arginine 66 and glutamate 129 each coordinate substrate. The Mg(2+) site is built by glutamate 129 and aspartate 156.

It belongs to the HpcH/HpaI aldolase family. Citrate lyase beta subunit subfamily. As to quaternary structure, oligomer with a subunit composition of (alpha,beta,gamma)6. Mg(2+) is required as a cofactor.

The protein resides in the cytoplasm. It catalyses the reaction citrate = oxaloacetate + acetate. The enzyme catalyses (3S)-citryl-CoA = oxaloacetate + acetyl-CoA. Represents a citryl-ACP lyase. The protein is Citrate lyase subunit beta (citE) of Haemophilus influenzae (strain ATCC 51907 / DSM 11121 / KW20 / Rd).